The following is a 299-amino-acid chain: Glycine--tRNA ligase alpha subunit (299 aa).

This sequence belongs to the class-II aminoacyl-tRNA synthetase family. In terms of assembly, tetramer of two alpha and two beta subunits.

It is found in the cytoplasm. It carries out the reaction tRNA(Gly) + glycine + ATP = glycyl-tRNA(Gly) + AMP + diphosphate. The polypeptide is Glycine--tRNA ligase alpha subunit (Dichelobacter nodosus (strain VCS1703A)).